The sequence spans 424 residues: Interleukin-13 receptor subunit alpha-1 (424 aa).

An N-terminal signal peptide occupies residues 1 to 25; sequence MARPALLGELLVLLLWTATVGQVAA. Topologically, residues 26–340 are extracellular; it reads ATEVQPPVTN…QSIGKEQNST (315 aa). One can recognise a Fibronectin type-III 1 domain in the interval 32–121; that stretch reads PVTNLSVSVE…VKKCISPPEG (90 aa). Residues Asn-35, Asn-59, Asn-103, and Asn-136 are each glycosylated (N-linked (GlcNAc...) asparagine). A disulfide bond links Cys-44 and Cys-93. Intrachain disulfides connect Cys-132-Cys-142 and Cys-171-Cys-183. A Fibronectin type-III 2 domain is found at 224 to 336; the sequence is KPDPPHIKHL…WSEAQSIGKE (113 aa). Asn-262 is a glycosylation site (N-linked (GlcNAc...) asparagine). Residues 324 to 328 carry the WSXWS motif motif; the sequence is WSDWS. Asn-338 is a glycosylation site (N-linked (GlcNAc...) asparagine). A helical membrane pass occupies residues 341–364; it reads FYTTMLLTIPVFVAVAVIILLFYL. Topologically, residues 365–424 are cytoplasmic; that stretch reads KRLKIIIFPPIPDPGKIFKEMFGDQNDDTLHWKKYDIYEKQSKEETDSVVLIENLKKAAP. A Box 1 motif motif is present at residues 371 to 379; that stretch reads IFPPIPDPG.

It belongs to the type I cytokine receptor family. Type 5 subfamily. In terms of assembly, interleukin-13 receptor is a complex of IL4R, IL13RA1, and possibly other components. Interacts with TRAF3IP1. Interacts with IL4. In terms of tissue distribution, spleen, liver, thymus, heart, lung, kidney, testis, stomach, brain, skin, and colon; but not skeletal muscle.

The protein resides in the membrane. In terms of biological role, binds with low affinity to interleukin-13 (IL13). Together with IL4RA can form a functional receptor for IL13. Also serves as an alternate accessory protein to the common cytokine receptor gamma chain for interleukin-4 (IL4) signaling, but cannot replace the function of IL2RG in allowing enhanced interleukin-2 (IL2) binding activity. The chain is Interleukin-13 receptor subunit alpha-1 (Il13ra1) from Mus musculus (Mouse).